We begin with the raw amino-acid sequence, 352 residues long: Homocitrate synthase, omega subunit (352 aa).

The protein belongs to the alpha-IPM synthase/homocitrate synthase family. Heterodimer of an alpha and an omega chain.

It catalyses the reaction acetyl-CoA + 2-oxoglutarate + H2O = (2R)-homocitrate + CoA + H(+). Functionally, this protein is a Fe-Mo-cofactor biosynthetic component. The chain is Homocitrate synthase, omega subunit (nifV-OMEGA) from Clostridium pasteurianum.